Reading from the N-terminus, the 229-residue chain is Peptidase E (229 aa).

Residues Ser-120, Asp-135, and His-157 each act as charge relay system in the active site.

Belongs to the peptidase S51 family.

The protein resides in the cytoplasm. It catalyses the reaction Dipeptidase E catalyzes the hydrolysis of dipeptides Asp-|-Xaa. It does not act on peptides with N-terminal Glu, Asn or Gln, nor does it cleave isoaspartyl peptides.. Its function is as follows. Hydrolyzes dipeptides containing N-terminal aspartate residues. May play a role in allowing the cell to use peptide aspartate to spare carbon otherwise required for the synthesis of the aspartate family of amino acids. The sequence is that of Peptidase E from Salmonella paratyphi A (strain AKU_12601).